The chain runs to 390 residues: 3-ketosteroid-9-alpha-monooxygenase, oxygenase component (390 aa).

The 103-residue stretch at 32–134 (WHCLGLLRDF…TLERNGQLYV (103 aa)) folds into the Rieske domain. [2Fe-2S] cluster-binding residues include Cys-73, His-75, Cys-92, and His-95. The Fe cation site is built by Asn-181, His-187, His-192, and Asp-311.

In terms of assembly, homotrimer. The two-component system 3-ketosteroid-9-alpha-monooxygenase is composed of an oxygenase component KshA and a reductase component KshB. Requires [2Fe-2S] cluster as cofactor. Fe cation is required as a cofactor.

It carries out the reaction androsta-1,4-diene-3,17-dione + 2 reduced [2Fe-2S]-[ferredoxin] + O2 + 2 H(+) = 9alpha-hydroxyandrosta-1,4-diene-3,17-dione + 2 oxidized [2Fe-2S]-[ferredoxin] + H2O. It functions in the pathway steroid metabolism; cholesterol degradation. Functionally, probably involved in the degradation of cholesterol. In vitro, catalyzes the introduction of a 9alpha-hydroxyl moiety into the ring B of 3-ketosteroid substrates such as 1,4-androstadiene-3,17-dione (ADD), 4-androstene-3,17-dione (AD), 4-androstene-17beta-ol-3-one (testosterone), 4-pregnene-3,20-dione (progesterone), 19-nor-4-androstene-3,17-dione, 1-(5alpha)-androstene-3,17-dione, 5alpha-androstane-3,17-dione, 5beta-androstane-3,17-dione, 5alpha-androstane-17beta-ol-3-one (stanolon), 11beta-hydrocortisone, 3-oxo-23,24-bisnorcholesta-4-en-22-oate (4-BNC), 23,24-bisnorcholesta-4-ene-22-oate, 3-oxo-23,24-bisnorcholesta-1,4-dien-22-oate (1,4-BNC) and 3-oxo-23,24-bisnorcholesta-1,4-dien-22-oyl-coenzyme A thioester (1,4-BNC-CoA). KshA5 has the broadest substrate range without a clear substrate preference and is active with Delta-4, Delta-1,4, 5alpha-H and 5beta-H steroids, as well as with steroids having bulky aliphatic side chains and an isopropionyl side chain at C17. In Rhodococcus rhodochrous, this protein is 3-ketosteroid-9-alpha-monooxygenase, oxygenase component.